A 267-amino-acid polypeptide reads, in one-letter code: AMP/ADP-polyphosphate phosphotransferase (267 aa).

The protein belongs to the polyphosphate kinase 2 (PPK2) family. Class III subfamily. Requires Mn(2+) as cofactor.

It carries out the reaction [phosphate](n) + ADP = [phosphate](n+1) + AMP. It catalyses the reaction [phosphate](n) + ATP = [phosphate](n+1) + ADP. Functionally, uses inorganic polyphosphate (polyP) as a donor to convert both AMP to ADP and ADP to ATP. Can also use GMP, CMP, UMP, GDP, CDP and UDP. The chain is AMP/ADP-polyphosphate phosphotransferase from Meiothermus ruber (strain ATCC 35948 / DSM 1279 / VKM B-1258 / 21) (Thermus ruber).